The sequence spans 216 residues: 7-carboxy-7-deazaguanine synthase (216 aa).

Substrate-binding positions include 12–14 (LQG) and Arg27. The 199-residue stretch at 18–216 (RAGRAAVFCR…LQTHKYLGIP (199 aa)) folds into the Radical SAM core domain. [4Fe-4S] cluster is bound by residues Cys31, Cys46, and Cys49. Thr51 lines the Mg(2+) pocket. Thr93 is a substrate binding site. Residues Gly95, 136 to 138 (SPK), and 176 to 179 (QPRD) contribute to the S-adenosyl-L-methionine site. Pro216 is a binding site for substrate.

It belongs to the radical SAM superfamily. 7-carboxy-7-deazaguanine synthase family. In terms of assembly, homodimer. [4Fe-4S] cluster is required as a cofactor. Requires S-adenosyl-L-methionine as cofactor. The cofactor is Mg(2+).

It carries out the reaction 6-carboxy-5,6,7,8-tetrahydropterin + H(+) = 7-carboxy-7-deazaguanine + NH4(+). The protein operates within purine metabolism; 7-cyano-7-deazaguanine biosynthesis. In terms of biological role, catalyzes the complex heterocyclic radical-mediated conversion of 6-carboxy-5,6,7,8-tetrahydropterin (CPH4) to 7-carboxy-7-deazaguanine (CDG), a step common to the biosynthetic pathways of all 7-deazapurine-containing compounds. The sequence is that of 7-carboxy-7-deazaguanine synthase from Nitratidesulfovibrio vulgaris (strain ATCC 29579 / DSM 644 / CCUG 34227 / NCIMB 8303 / VKM B-1760 / Hildenborough) (Desulfovibrio vulgaris).